A 759-amino-acid polypeptide reads, in one-letter code: Phosphoribosylformylglycinamidine synthase subunit PurL (759 aa).

The active site involves H46. ATP-binding residues include Y49 and K88. E90 lines the Mg(2+) pocket. Substrate-binding positions include 91–94 (SHNH) and R113. H92 acts as the Proton acceptor in catalysis. Residue D114 participates in Mg(2+) binding. Q237 contributes to the substrate binding site. D265 provides a ligand contact to Mg(2+). 309 to 311 (ESQ) provides a ligand contact to substrate. ATP is bound by residues D498 and G535. Residue N536 participates in Mg(2+) binding. Substrate is bound at residue S538.

This sequence belongs to the FGAMS family. Monomer. Part of the FGAM synthase complex composed of 1 PurL, 1 PurQ and 2 PurS subunits.

The protein localises to the cytoplasm. It catalyses the reaction N(2)-formyl-N(1)-(5-phospho-beta-D-ribosyl)glycinamide + L-glutamine + ATP + H2O = 2-formamido-N(1)-(5-O-phospho-beta-D-ribosyl)acetamidine + L-glutamate + ADP + phosphate + H(+). It participates in purine metabolism; IMP biosynthesis via de novo pathway; 5-amino-1-(5-phospho-D-ribosyl)imidazole from N(2)-formyl-N(1)-(5-phospho-D-ribosyl)glycinamide: step 1/2. Its function is as follows. Part of the phosphoribosylformylglycinamidine synthase complex involved in the purines biosynthetic pathway. Catalyzes the ATP-dependent conversion of formylglycinamide ribonucleotide (FGAR) and glutamine to yield formylglycinamidine ribonucleotide (FGAM) and glutamate. The FGAM synthase complex is composed of three subunits. PurQ produces an ammonia molecule by converting glutamine to glutamate. PurL transfers the ammonia molecule to FGAR to form FGAM in an ATP-dependent manner. PurS interacts with PurQ and PurL and is thought to assist in the transfer of the ammonia molecule from PurQ to PurL. This Anaeromyxobacter dehalogenans (strain 2CP-C) protein is Phosphoribosylformylglycinamidine synthase subunit PurL.